A 118-amino-acid polypeptide reads, in one-letter code: UPF0295 protein BT9727_0449 (118 aa).

2 helical membrane passes run 12–32 and 43–63; these read IRTFALSLVFIGLFIAYLGVF and FMMVGFLAVIASTVVYFWIGM.

Belongs to the UPF0295 family.

It is found in the cell membrane. The chain is UPF0295 protein BT9727_0449 from Bacillus thuringiensis subsp. konkukian (strain 97-27).